Consider the following 648-residue polypeptide: Macrolide export ATP-binding/permease protein MacB (648 aa).

Positions 5–243 constitute an ABC transporter domain; the sequence is LELKDIRRSY…TGGTEPVVNT (239 aa). ATP is bound at residue 41–48; it reads GASGSGKS. The next 4 helical transmembrane spans lie at 273 to 293, 523 to 543, 576 to 596, and 611 to 631; these read LLTM…VVVG, LFLT…VMNI, AVLV…LIAF, and PLAL…FGWL.

It belongs to the ABC transporter superfamily. Macrolide exporter (TC 3.A.1.122) family. Homodimer. Part of the tripartite efflux system MacAB-TolC, which is composed of an inner membrane transporter, MacB, a periplasmic membrane fusion protein, MacA, and an outer membrane component, TolC. The complex forms a large protein conduit and can translocate molecules across both the inner and outer membranes. Interacts with MacA.

The protein resides in the cell inner membrane. In terms of biological role, part of the tripartite efflux system MacAB-TolC. MacB is a non-canonical ABC transporter that contains transmembrane domains (TMD), which form a pore in the inner membrane, and an ATP-binding domain (NBD), which is responsible for energy generation. Confers resistance against macrolides. The sequence is that of Macrolide export ATP-binding/permease protein MacB from Escherichia coli O6:K15:H31 (strain 536 / UPEC).